We begin with the raw amino-acid sequence, 204 residues long: Minor allergen Alt a 7 (204 aa).

The Flavodoxin-like domain occupies 5-195 (IAIVYYSMYG…NIAQAQGKAF (191 aa)).

The protein belongs to the WrbA family.

The protein localises to the cytoplasm. This chain is Minor allergen Alt a 7 (ALTA7), found in Alternaria alternata (Alternaria rot fungus).